We begin with the raw amino-acid sequence, 372 residues long: Queuine tRNA-ribosyltransferase (372 aa).

D92 (proton acceptor) is an active-site residue. Residues 92–96 (DSGGY), D146, Q188, and G215 contribute to the substrate site. Residues 246 to 252 (GIGTIRE) are RNA binding. D265 acts as the Nucleophile in catalysis. The RNA binding; important for wobble base 34 recognition stretch occupies residues 270–274 (TRLGR). Residues C303, C305, C308, and H334 each coordinate Zn(2+).

It belongs to the queuine tRNA-ribosyltransferase family. In terms of assembly, homodimer. Within each dimer, one monomer is responsible for RNA recognition and catalysis, while the other monomer binds to the replacement base PreQ1. The cofactor is Zn(2+).

The catalysed reaction is 7-aminomethyl-7-carbaguanine + guanosine(34) in tRNA = 7-aminomethyl-7-carbaguanosine(34) in tRNA + guanine. It functions in the pathway tRNA modification; tRNA-queuosine biosynthesis. Its function is as follows. Catalyzes the base-exchange of a guanine (G) residue with the queuine precursor 7-aminomethyl-7-deazaguanine (PreQ1) at position 34 (anticodon wobble position) in tRNAs with GU(N) anticodons (tRNA-Asp, -Asn, -His and -Tyr). Catalysis occurs through a double-displacement mechanism. The nucleophile active site attacks the C1' of nucleotide 34 to detach the guanine base from the RNA, forming a covalent enzyme-RNA intermediate. The proton acceptor active site deprotonates the incoming PreQ1, allowing a nucleophilic attack on the C1' of the ribose to form the product. After dissociation, two additional enzymatic reactions on the tRNA convert PreQ1 to queuine (Q), resulting in the hypermodified nucleoside queuosine (7-(((4,5-cis-dihydroxy-2-cyclopenten-1-yl)amino)methyl)-7-deazaguanosine). This chain is Queuine tRNA-ribosyltransferase, found in Prochlorococcus marinus (strain SARG / CCMP1375 / SS120).